Consider the following 362-residue polypeptide: Serine/threonine-protein phosphatase 2A activator 1 (362 aa).

Residues 1-10 are compositionally biased toward pro residues; sequence MQPHTQPPQP. Disordered regions lie at residues 1-28 and 339-362; these read MQPH…APPR and NVEE…PWAR. Positions 340–351 are enriched in basic and acidic residues; sequence VEERGDKNEGKG.

The protein belongs to the PTPA-type PPIase family.

Its subcellular location is the cytoplasm. The protein resides in the nucleus. The catalysed reaction is [protein]-peptidylproline (omega=180) = [protein]-peptidylproline (omega=0). Functionally, PPIases accelerate the folding of proteins. It catalyzes the cis-trans isomerization of proline imidic peptide bonds in oligopeptides. Acts as a regulatory subunit for PP2A-like phosphatases modulating their activity or substrate specificity, probably by inducing a conformational change in the catalytic subunit, a direct target of the PPIase. Can reactivate inactive phosphatase PP2A-phosphatase methylesterase complexes (PP2Ai) in presence of ATP and Mg(2+) by dissociating the inactive form from the complex. The sequence is that of Serine/threonine-protein phosphatase 2A activator 1 (RRD1) from Cryptococcus neoformans var. neoformans serotype D (strain B-3501A) (Filobasidiella neoformans).